Reading from the N-terminus, the 358-residue chain is UPF0421 protein BT9727_2513 (358 aa).

4 helical membrane-spanning segments follow: residues 19-39 (IAVF…IFAV), 74-94 (FTFF…FTIV), 109-129 (TLTA…AFLI), and 131-151 (LATT…ILPP).

This sequence belongs to the UPF0421 family.

It localises to the cell membrane. The protein is UPF0421 protein BT9727_2513 of Bacillus thuringiensis subsp. konkukian (strain 97-27).